The sequence spans 104 residues: L-rhamnose mutarotase (104 aa).

Position 18 (tyrosine 18) interacts with substrate. Histidine 22 (proton donor) is an active-site residue. Residues tyrosine 41 and 76 to 77 (WW) each bind substrate.

This sequence belongs to the rhamnose mutarotase family. In terms of assembly, homodimer.

The protein resides in the cytoplasm. It catalyses the reaction alpha-L-rhamnose = beta-L-rhamnose. It functions in the pathway carbohydrate metabolism; L-rhamnose metabolism. Involved in the anomeric conversion of L-rhamnose. The sequence is that of L-rhamnose mutarotase from Salmonella dublin (strain CT_02021853).